Consider the following 92-residue polypeptide: Small ribosomal subunit protein uS19 (92 aa).

It belongs to the universal ribosomal protein uS19 family.

Its function is as follows. Protein S19 forms a complex with S13 that binds strongly to the 16S ribosomal RNA. This chain is Small ribosomal subunit protein uS19, found in Rhizobium rhizogenes (strain K84 / ATCC BAA-868) (Agrobacterium radiobacter).